The primary structure comprises 157 residues: Crossover junction endodeoxyribonuclease RuvC (157 aa).

Catalysis depends on residues Asp-7, Glu-67, and Asp-140. Mg(2+) is bound by residues Asp-7, Glu-67, and Asp-140.

The protein belongs to the RuvC family. Homodimer which binds Holliday junction (HJ) DNA. The HJ becomes 2-fold symmetrical on binding to RuvC with unstacked arms; it has a different conformation from HJ DNA in complex with RuvA. In the full resolvosome a probable DNA-RuvA(4)-RuvB(12)-RuvC(2) complex forms which resolves the HJ. Mg(2+) is required as a cofactor.

Its subcellular location is the cytoplasm. It carries out the reaction Endonucleolytic cleavage at a junction such as a reciprocal single-stranded crossover between two homologous DNA duplexes (Holliday junction).. Its function is as follows. The RuvA-RuvB-RuvC complex processes Holliday junction (HJ) DNA during genetic recombination and DNA repair. Endonuclease that resolves HJ intermediates. Cleaves cruciform DNA by making single-stranded nicks across the HJ at symmetrical positions within the homologous arms, yielding a 5'-phosphate and a 3'-hydroxyl group; requires a central core of homology in the junction. The consensus cleavage sequence is 5'-(A/T)TT(C/G)-3'. Cleavage occurs on the 3'-side of the TT dinucleotide at the point of strand exchange. HJ branch migration catalyzed by RuvA-RuvB allows RuvC to scan DNA until it finds its consensus sequence, where it cleaves and resolves the cruciform DNA. This Rickettsia typhi (strain ATCC VR-144 / Wilmington) protein is Crossover junction endodeoxyribonuclease RuvC.